Reading from the N-terminus, the 675-residue chain is UvrABC system protein B (675 aa).

The 388-residue stretch at 30–417 (SGIEQGNRNQ…SDQIVEQVVR (388 aa)) folds into the Helicase ATP-binding domain. Residue 43–50 (GVTGSGKT) participates in ATP binding. The short motif at 96–119 (YYDYYQPEAYVPSSDTFIEKDAAI) is the Beta-hairpin element. Positions 434–601 (QVDDVLSEIN…AVRQKVKEID (168 aa)) constitute a Helicase C-terminal domain. The UVR domain occupies 637 to 672 (AKHMSKLEKEMLKASKELQFEQAARLRDEILRLKAQ).

This sequence belongs to the UvrB family. As to quaternary structure, forms a heterotetramer with UvrA during the search for lesions. Interacts with UvrC in an incision complex.

The protein localises to the cytoplasm. In terms of biological role, the UvrABC repair system catalyzes the recognition and processing of DNA lesions. A damage recognition complex composed of 2 UvrA and 2 UvrB subunits scans DNA for abnormalities. Upon binding of the UvrA(2)B(2) complex to a putative damaged site, the DNA wraps around one UvrB monomer. DNA wrap is dependent on ATP binding by UvrB and probably causes local melting of the DNA helix, facilitating insertion of UvrB beta-hairpin between the DNA strands. Then UvrB probes one DNA strand for the presence of a lesion. If a lesion is found the UvrA subunits dissociate and the UvrB-DNA preincision complex is formed. This complex is subsequently bound by UvrC and the second UvrB is released. If no lesion is found, the DNA wraps around the other UvrB subunit that will check the other stand for damage. The polypeptide is UvrABC system protein B (Acinetobacter baylyi (strain ATCC 33305 / BD413 / ADP1)).